A 2474-amino-acid chain; its full sequence is Polyprotein P1234 (2474 aa).

One can recognise an Alphavirus-like MT domain in the interval 28-259; that stretch reads EPRQVTPNDH…ESRKLLKSWH (232 aa). Residue His37 is the For mRNA-capping enzyme nsP1 activity of the active site. The Zn(2+) site is built by His79, Glu129, Cys134, and Cys141. The tract at residues 295–450 is membrane-binding and oligomerization; the sequence is GLYGKTTGYA…QKVPAEFDSF (156 aa). S-palmitoyl cysteine; by host attachment occurs at residues Cys417 and Cys419. In terms of domain architecture, (+)RNA virus helicase ATP-binding spans 690 to 842; sequence DLTNPPYHEF…HNICTQVYHK (153 aa). Residue 721-728 participates in a ribonucleoside 5'-triphosphate binding; that stretch reads GVPGSGKS. One can recognise a (+)RNA virus helicase C-terminal domain in the interval 843-991; it reads SISRRCTLPV…IKEWEVEHAS (149 aa). One can recognise a Peptidase C9 domain in the interval 1004–1327; sequence DTFQNKANVC…NQLNAAFVGQ (324 aa). A nucleolus localization signal region spans residues 1005 to 1024; that stretch reads TFQNKANVCWAKSLVPILET. Residue Cys1013 is the For cysteine protease nsP2 activity of the active site. The short motif at 1058–1067 is the Nuclear export signal element; it reads TRMYGVDLDS. His1083 serves as the catalytic For cysteine protease nsP2 activity. A Nuclear localization signal motif is present at residues 1182 to 1186; the sequence is PTKRV. Residues 1334–1493 enclose the Macro domain; the sequence is APSYRVKRMD…KIAEAIQMRT (160 aa). Residues Asp1343, Asn1357, Gly1365, Gly1445, Val1446, and Tyr1447 each coordinate ADP-D-ribose. Positions 1595, 1597, 1620, and 1638 each coordinate Zn(2+). The segment at 1651-1706 is disordered; the sequence is RVSPREYKSPQETAQEVSSTTSLTHSQFDLSVDGEELPAPSDLEADAPIPEPTPDD. An HVD region spans residues 1659-1857; that stretch reads SPQETAQEVS…TCSDTDDELX (199 aa). The segment covering 1660 to 1679 has biased composition (polar residues); the sequence is PQETAQEVSSTTSLTHSQFD. Interaction with host CD2AP stretches follow at residues 1726 to 1739 and 1756 to 1767; these read VMNTAPVAPPRRRR and PMASVRFFRADL. The interval 1745 to 1793 is interaction with host FHL1; the sequence is VTCDEREGNVLPMASVRFFRADLHSIVQETAEIRDTAASLQAPLSVATE. The FGDF; binding to host G3BP1 signature appears at 1812 to 1815; the sequence is FGDF. The interaction with host CD2AP stretch occupies residues 1820-1828; that stretch reads IESLSSELL. Residues 1830 to 1833 carry the FGDF; binding to host G3BP1 motif; sequence FGDF. One can recognise a RdRp catalytic domain in the interval 2228–2343; that stretch reads DAVLETDIAS…HGVVSDELMA (116 aa).

In terms of assembly, homododecamer. The enzyme forms a membrane-associated dodecameric ring with a central channel for the exchange of between the viral replication factories and the host cytoplasm. Interacts with non-structural protein 3. Interacts with RNA-directed RNA polymerase nsP4. Interacts with protease nsP2. Interacts with itself. Interacts with host STING1; this interaction results in inhibition of cGAS-STING signaling and increased levels of palmitoylation and protein stabilization of nsP1. Interacts with host TMEM45B; this interaction leads to viral replication inhibition. As to quaternary structure, interacts with mRNA-capping enzyme nsP1. Interacts (via C-terminus) with host G3BP1; this interaction inhibits the formation of host stress granules on viral mRNAs and the nsp3-G3BP1 complexes bind viral RNAs and probably orchestrate the assembly of viral replication complexes. Interacts (via C-terminus) with host G3BP2; this interaction inhibits the formation of host stress granules on viral mRNAs and the nsp3-G3BP2 complexes bind viral RNAs and probably orchestrate the assembly of viral replication complexes. Interacts (via C-terminus) with host NAP1L1. Interacts (via C-terminus) with host NAP1L4. Interacts (via C-terminus) with host DHX9; this interaction allows the recruitment of DHX9 to the plasma membrane, where it associates with viral replication complexes and may play a role in the translation-to-replication switch. Interacts (via C-terminus) with host FHL1 (via LIM domain 1); this interaction is required for viral RNA replication. Interacts (via C-terminus) with host CD2AP; this interaction plays a role in initiation of viral replication. Interacts (via C-terminus) with host SH3KBP1; this interaction plays a role in initiation of viral replication. Interacts with mRNA-capping enzyme nsP1. Interacts with protease nsP2. interacts with itself. Interacts with host TMEM45B; this interaction leads to viral replication inhibition. In terms of assembly, interacts with RNA-directed RNA polymerase nsP4. Interacts with mRNA-capping enzyme nsP1. Interacts with KPNA1/karyopherin-alpha1; this interaction probably allows the active transport of protease nsP2 into the host nucleus. It depends on Mg(2+) as a cofactor. Requires Mn(2+) as cofactor. Post-translationally, specific enzymatic cleavages in vivo yield mature proteins. The processing of the polyprotein is temporally regulated. In early stages (1.7 hpi), P1234 is first cleaved in trans through its nsP2 protease activity, releasing P123' and nsP4, which associate to form the early replication complex. At the same time, P1234 is also cut at the nsP1/nsP2 site early in infection but with lower efficiency. After replication of the viral minus-strand RNAs (4 hpi), the polyproteins are cut at the nsP1/nsP2 and nsP2/nsP3 sites very efficiently, preventing accumulation of P123' and P1234 and allowing the formation of the late replication complex. NsP3'/nsP4 site is not cleaved anymore and P34 is produced rather than nsP4. In terms of processing, specific enzymatic cleavages in vivo yield mature proteins. The processing of the polyprotein is temporally regulated. In early stages (1.7 hpi), P123 is cleaved at the nsP1/nsP2 site with low efficiency. After replication of the viral minus-strand RNAs (4 hpi), the polyproteins are cut at the nsP1/nsP2 and nsP2/nsP3 sites very efficiently, preventing accumulation of P123 and allowing the formation of the late replication complex. Specific enzymatic cleavages in vivo yield mature proteins. The processing of the polyprotein is temporally regulated. In early stages (1.7 hpi), P123' is cleaved at the nsP1/nsP2 site with low efficiency. After replication of the viral minus-strand RNAs (4 hpi), the polyproteins are cut at the nsP1/nsP2 and nsP2/nsP3 sites very efficiently, preventing accumulation of P123' and allowing the formation of the late replication complex. Post-translationally, palmitoylated by host palmitoyltransferases ZDHHC2 and ZDHHC19. Palmitoylation is increased by the interacton with host STING1. In terms of processing, phosphorylated by host on serines and threonines. Ubiquitinated; targets the protein for rapid degradation via the ubiquitin system. Nsp4 is present in extremely low quantities due to low frequency of translation through the amber stop-codon and the degradation by the ubiquitin pathway.

It is found in the host cytoplasmic vesicle membrane. The protein localises to the host cell membrane. The protein resides in the host cell projection. Its subcellular location is the host filopodium. It localises to the host nucleus. It is found in the host cytoplasm. The enzyme catalyses GTP + S-adenosyl-L-methionine = N(7)-methyl-GTP + S-adenosyl-L-homocysteine. It carries out the reaction N(7)-methyl-GTP + L-histidyl-[protein] = N(tele)-(N(7)-methylguanosine 5'-phospho)-L-histidyl-[protein] + diphosphate. The catalysed reaction is N(tele)-(N(7)-methylguanosine 5'-phospho)-L-histidyl-[protein] + a 5'-end diphospho-(purine-ribonucleoside) in mRNA + H(+) = a 5'-end (N(7)-methyl 5'-triphosphoguanosine)-(purine-ribonucleoside) in mRNA + L-histidyl-[protein]. It catalyses the reaction a 5'-end triphospho-ribonucleoside in mRNA + H2O = a 5'-end diphospho-ribonucleoside in mRNA + phosphate + H(+). The enzyme catalyses a ribonucleoside 5'-triphosphate + H2O = a ribonucleoside 5'-diphosphate + phosphate + H(+). It carries out the reaction ATP + H2O = ADP + phosphate + H(+). The catalysed reaction is RNA(n) + a ribonucleoside 5'-triphosphate = RNA(n+1) + diphosphate. It catalyses the reaction 4-O-(ADP-D-ribosyl)-L-aspartyl-[protein] + H2O = L-aspartyl-[protein] + ADP-D-ribose + H(+). The enzyme catalyses 5-O-(ADP-D-ribosyl)-L-glutamyl-[protein] + H2O = L-glutamyl-[protein] + ADP-D-ribose + H(+). It carries out the reaction RNA(n) + ATP = RNA(n)-3'-adenine ribonucleotide + diphosphate. The catalysed reaction is ADP-alpha-D-ribose 1''-phosphate + H2O = ADP-D-ribose + phosphate. In terms of biological role, inactive precursor of the viral replicase, which is activated by cleavages carried out by the viral protease nsP2. Functionally, the early replication complex formed by the polyprotein P123 and nsP4 synthesizes minus-strand RNAs. As soon P123 is cleaved into mature proteins, the plus-strand RNAs synthesis begins. Its function is as follows. The early replication complex formed by the polyprotein P123' and nsP4 synthesizes minus-strand RNAs. Polyprotein P123' is a short-lived polyprotein that accumulates during early stage of infection. As soon P123' is cleaved into mature proteins, the plus-strand RNAs synthesis begins. Cytoplasmic capping enzyme that catalyzes two virus-specific reactions: methyltransferase and guanylyltransferase. mRNA-capping is necessary since all viral RNAs are synthesized in the cytoplasm, and host capping enzymes are restricted to the nucleus. The enzymatic reaction involves a covalent link between 7-methyl-GMP and nsP1, whereas eukaryotic capping enzymes form a covalent complex only with GMP. nsP1 capping consists in the following reactions: GTP is first methylated into 7-methyl-GMP and then is covalently linked to nsP1 to form the m7GMp-nsP1 complex from which 7-methyl-GMP complex is transferred to the mRNA to create the cap structure. NsP1 is also needed for the initiation of the minus-strand RNAs synthesis. At the initiation of virus replication, mediates the assembly of the viral replication complex made of the non-structural proteins, the association of this complex with the inner face of the plasma membrane and the formation of membranous spherules that serve as replication complex factories. Forms the neck of these spherules with a central channel for mediating communication and the passage of RNA, nucleotides, and small proteins between the viral replication complex and the host cytoplasm. Palmitoylated nsP1 is remodeling host cell cytoskeleton, and induces filopodium-like structure formation at the surface of the host cell. In terms of biological role, multifunctional protein whose N-terminus is part of the RNA polymerase complex and displays NTPase, RNA triphosphatase and helicase activities. NTPase and RNA triphosphatase are involved in viral RNA capping and helicase keeps a check on the dsRNA replication intermediates. The C-terminus harbors a protease that specifically cleaves the polyproteins and releases the mature proteins. Required for the shutoff of minus-strand RNAs synthesis. Specifically inhibits the host IFN response by promoting the nuclear export of host STAT1. Also inhibits host transcription by inducing the rapid proteasome-dependent degradation of POLR2A, a catalytic subunit of the RNAPII complex. The resulting inhibition of cellular protein synthesis serves to ensure maximal viral gene expression and to evade host immune response. Functionally, seems to be essential for minus-strand RNAs and subgenomic 26S mRNAs synthesis. Displays mono-ADP-ribosylhydrolase activity. ADP-ribosylation is a post-translational modification that controls various processes of the host cell and the virus probably needs to revert it for optimal viral replication. Binds proteins of FXR family and sequesters them into the viral RNA replication complexes thereby inhibiting the formation of host stress granules on viral mRNAs. The nsp3'-FXR complexes bind viral RNAs and probably orchestrate the assembly of viral replication complexes, thanks to the ability of FXR family members to self-assemble and bind DNA. Its function is as follows. Seems to be essential for minus-strand RNAs and subgenomic 26S mRNAs synthesis. Displays mono-ADP-ribosylhydrolase activity. ADP-ribosylation is a post-translational modification that controls various processes of the host cell and the virus probably needs to revert it for optimal viral replication. Binds proteins of G3BP family and sequesters them into the viral RNA replication complexes thereby inhibiting the formation of host stress granules on viral mRNAs. The nsp3-G3BP complexes bind viral RNAs and probably orchestrate the assembly of viral replication complexes, thanks to the ability of G3BP family members to self-assemble and bind DNA. RNA dependent RNA polymerase. Replicates genomic and antigenomic RNA by recognizing replications specific signals. The early replication complex formed by the polyprotein P123 and nsP4 synthesizes minus-strand RNAs. The late replication complex composed of fully processed nsP1-nsP4 is responsible for the production of genomic and subgenomic plus-strand RNAs. The protein is Polyprotein P1234 of Aedes aegypti (Yellowfever mosquito).